The chain runs to 134 residues: Small ribosomal subunit protein uS11 (134 aa).

The protein belongs to the universal ribosomal protein uS11 family. Part of the 30S ribosomal subunit. Interacts with proteins S7 and S18. Binds to IF-3.

Located on the platform of the 30S subunit, it bridges several disparate RNA helices of the 16S rRNA. Forms part of the Shine-Dalgarno cleft in the 70S ribosome. The protein is Small ribosomal subunit protein uS11 of Polaromonas sp. (strain JS666 / ATCC BAA-500).